The sequence spans 434 residues: MSNRKGGGGAGDYQEVIESLRRSQLIFEEDENAGPEIPTVVTSSSSASSQRSSASQHHRLNNMVVGGGGRDNEMSNNQNGNTPSVTIPSQCQVMTPRISSPSSVMAPSVTVTSGTVQQGKTFARIQGSSPSNTTHSTPTVAQAMQSVAPHIPIVGAGADDSSAEILSVFECPVCLEYMLPPYMQCPSGHLVCSNCRPKLQCCPTCRGPTPSVRNLGLEKIANTVRFPCKFSNSGCPLNFHHIDKMDHEELCEYRPYSCPCPGASCKWQGALADVMDHLKKVHKSITTLQGEDIVFLATDINLPGAVDWVMMQSCFDYNFMLVLEKQEKYDPAQSTQMFYAVVQLIGSKKEADNFVYRLELSANRRRMSWEATPRSIHEGVAFAIQQSDCLAFDTSAAQLFAENGNLGINVTISRIDGQQRRHPNESDAVDVEYD.

The segment at 27–88 is disordered; that stretch reads FEEDENAGPE…NGNTPSVTIP (62 aa). Over residues 43-55 the composition is skewed to low complexity; sequence SSSSASSQRSSAS. The span at 74–88 shows a compositional bias: polar residues; it reads MSNNQNGNTPSVTIP. The segment at 171 to 206 adopts an RING-type; degenerate zinc-finger fold; that stretch reads CPVCLEYMLPPYMQCPSGHLVCSNCRPKLQCCPTCR. Residues 220–415 form an SBD region; it reads IANTVRFPCK…LGINVTISRI (196 aa). The SIAH-type; degenerate zinc-finger motif lies at 223-283; that stretch reads TVRFPCKFSN…VMDHLKKVHK (61 aa). Residues Cys-228, Cys-235, His-247, Cys-251, Cys-258, Cys-265, His-277, and His-282 each contribute to the Zn(2+) site.

The protein belongs to the SINA (Seven in absentia) family. Interacts with tir-1.

It carries out the reaction S-ubiquitinyl-[E2 ubiquitin-conjugating enzyme]-L-cysteine + [acceptor protein]-L-lysine = [E2 ubiquitin-conjugating enzyme]-L-cysteine + N(6)-ubiquitinyl-[acceptor protein]-L-lysine.. The protein operates within protein modification; protein ubiquitination. Functionally, E3 ubiquitin-protein ligase that mediates ubiquitination and subsequent proteasomal degradation of target proteins. E3 ubiquitin ligases accept ubiquitin from an E2 ubiquitin-conjugating enzyme in the form of a thioester and then directly transfers the ubiquitin to targeted substrates. It probably triggers the ubiquitin-mediated degradation of different substrates. This Caenorhabditis briggsae protein is E3 ubiquitin-protein ligase siah-1.